The primary structure comprises 436 residues: UPF0597 protein YhaM (436 aa).

Belongs to the UPF0597 family.

This is UPF0597 protein YhaM from Salmonella choleraesuis (strain SC-B67).